The primary structure comprises 47 residues: Large ribosomal subunit protein eL40 (47 aa).

It belongs to the eukaryotic ribosomal protein eL40 family.

This Methanococcus maripaludis (strain C5 / ATCC BAA-1333) protein is Large ribosomal subunit protein eL40.